The primary structure comprises 435 residues: 3-phosphoshikimate 1-carboxyvinyltransferase (435 aa).

3-phosphoshikimate is bound by residues Lys22, Ser23, and Arg27. Lys22 is a binding site for phosphoenolpyruvate. Residues Gly94 and Arg122 each coordinate phosphoenolpyruvate. 3-phosphoshikimate-binding residues include Ser166, Gln168, Asp314, and Lys341. Gln168 provides a ligand contact to phosphoenolpyruvate. The active-site Proton acceptor is the Asp314. Phosphoenolpyruvate-binding residues include Arg345 and Arg388.

Belongs to the EPSP synthase family. In terms of assembly, monomer.

The protein localises to the cytoplasm. It catalyses the reaction 3-phosphoshikimate + phosphoenolpyruvate = 5-O-(1-carboxyvinyl)-3-phosphoshikimate + phosphate. Its pathway is metabolic intermediate biosynthesis; chorismate biosynthesis; chorismate from D-erythrose 4-phosphate and phosphoenolpyruvate: step 6/7. In terms of biological role, catalyzes the transfer of the enolpyruvyl moiety of phosphoenolpyruvate (PEP) to the 5-hydroxyl of shikimate-3-phosphate (S3P) to produce enolpyruvyl shikimate-3-phosphate and inorganic phosphate. This Vesicomyosocius okutanii subsp. Calyptogena okutanii (strain HA) protein is 3-phosphoshikimate 1-carboxyvinyltransferase.